We begin with the raw amino-acid sequence, 527 residues long: Probable bifunctional tRNA threonylcarbamoyladenosine biosynthesis protein (527 aa).

Residues 1-324 (MIVLGLEGTA…YRIDEVDAPW (324 aa)) form a kae1 region. Fe cation contacts are provided by histidine 107, histidine 111, and tyrosine 128. L-threonylcarbamoyladenylate contacts are provided by residues 128 to 132 (YVSGG), aspartate 160, glycine 173, glutamate 177, and asparagine 257. Aspartate 285 serves as a coordination point for Fe cation. The Protein kinase domain occupies 330-527 (VKYRDAGAES…EDIRRRHRYV (198 aa)). ATP is bound by residues 333–341 (RDAGAESRI) and lysine 354. The Proton acceptor; for kinase activity role is filled by aspartate 445.

It in the N-terminal section; belongs to the KAE1 / TsaD family. This sequence in the C-terminal section; belongs to the protein kinase superfamily. Tyr protein kinase family. BUD32 subfamily. In terms of assembly, component of the KEOPS complex that consists of Kae1, Bud32, Cgi121 and Pcc1; the whole complex dimerizes. Fe(2+) is required as a cofactor.

It is found in the cytoplasm. It catalyses the reaction L-seryl-[protein] + ATP = O-phospho-L-seryl-[protein] + ADP + H(+). The catalysed reaction is L-threonyl-[protein] + ATP = O-phospho-L-threonyl-[protein] + ADP + H(+). It carries out the reaction L-threonylcarbamoyladenylate + adenosine(37) in tRNA = N(6)-L-threonylcarbamoyladenosine(37) in tRNA + AMP + H(+). Functionally, required for the formation of a threonylcarbamoyl group on adenosine at position 37 (t(6)A37) in tRNAs that read codons beginning with adenine. Is a component of the KEOPS complex that is probably involved in the transfer of the threonylcarbamoyl moiety of threonylcarbamoyl-AMP (TC-AMP) to the N6 group of A37. The Kae1 domain likely plays a direct catalytic role in this reaction. The Bud32 domain probably displays kinase activity that regulates Kae1 function. The sequence is that of Probable bifunctional tRNA threonylcarbamoyladenosine biosynthesis protein from Thermoplasma volcanium (strain ATCC 51530 / DSM 4299 / JCM 9571 / NBRC 15438 / GSS1).